The chain runs to 217 residues: Small ribosomal subunit protein uS3 (217 aa).

In terms of domain architecture, KH type-2 spans 38-106 (IRKFIDNELK…KVHINVIEIK (69 aa)).

Belongs to the universal ribosomal protein uS3 family. Part of the 30S ribosomal subunit. Forms a tight complex with proteins S10 and S14.

Its function is as follows. Binds the lower part of the 30S subunit head. Binds mRNA in the 70S ribosome, positioning it for translation. This chain is Small ribosomal subunit protein uS3, found in Staphylococcus aureus (strain MSSA476).